Reading from the N-terminus, the 217-residue chain is Adenylate kinase (217 aa).

10-15 lines the ATP pocket; that stretch reads GAGKGT. The tract at residues 30 to 59 is NMP; that stretch reads STGDMFRAAMKNETELGLKAKSFIDAGDLV. AMP is bound by residues T31, R36, 57 to 59, 85 to 88, and Q92; these read DLV and GFPR. The tract at residues 126-163 is LID; sequence GRRVSPTTGKTYHIVYNPPKVEGKCDIDGSDLIQRDDD. ATP contacts are provided by residues R127 and 136-137; that span reads TY. AMP is bound by residues R160 and R171. Residue Q199 participates in ATP binding.

This sequence belongs to the adenylate kinase family. Monomer.

It is found in the cytoplasm. The enzyme catalyses AMP + ATP = 2 ADP. Its pathway is purine metabolism; AMP biosynthesis via salvage pathway; AMP from ADP: step 1/1. In terms of biological role, catalyzes the reversible transfer of the terminal phosphate group between ATP and AMP. Plays an important role in cellular energy homeostasis and in adenine nucleotide metabolism. The chain is Adenylate kinase from Shouchella clausii (strain KSM-K16) (Alkalihalobacillus clausii).